The following is a 132-amino-acid chain: Protein NrdI (132 aa).

It belongs to the NrdI family.

In terms of biological role, probably involved in ribonucleotide reductase function. In Bartonella henselae (strain ATCC 49882 / DSM 28221 / CCUG 30454 / Houston 1) (Rochalimaea henselae), this protein is Protein NrdI.